We begin with the raw amino-acid sequence, 177 residues long: Inner membrane-spanning protein YciB (177 aa).

A run of 5 helical transmembrane segments spans residues 22–42, 50–70, 76–96, 121–141, and 151–171; these read IFIASKSLIFISGLTCLLYWI, INLFSFITIAIFGSLTIIFHN, WKITIIYMIFSVILFISQFFM, FFWALFFLFCSILNIYVALCL, and VFGLSFLMFLSILITSIYINF.

This sequence belongs to the YciB family.

It localises to the cell inner membrane. Its function is as follows. Plays a role in cell envelope biogenesis, maintenance of cell envelope integrity and membrane homeostasis. In Buchnera aphidicola subsp. Schizaphis graminum (strain Sg), this protein is Inner membrane-spanning protein YciB.